The chain runs to 178 residues: Large ribosomal subunit protein eL20w (178 aa).

Belongs to the eukaryotic ribosomal protein eL20 family.

This is Large ribosomal subunit protein eL20w (RPL18AD) from Arabidopsis thaliana (Mouse-ear cress).